Here is a 244-residue protein sequence, read N- to C-terminus: Probable hydrolase R7 (244 aa).

A signal peptide spans 1–20; sequence MTKPFILLVPGSFAPETIYA. Catalysis depends on charge relay system residues Asp-192 and His-224. Asn-227 carries an N-linked (GlcNAc...) asparagine glycan.

This sequence belongs to the AB hydrolase superfamily.

Its pathway is secondary metabolite biosynthesis. Its function is as follows. Probable hydrolase; part of the gene cluster that mediates the biosynthesis of squalestatin S1 (SQS1, also known as zaragozic acid A), a lead compound for the treatment of hyper-cholesterolemia by targeting squalene synthase (SS). Both phenylalanine and benzoic acid are known precursors of SQS1 and so it is unsurprising that the cluster also contains genes potentially involved in benzoate production such as phenyl-alanine ammonia lysase (PAL) M7, which catalyzes the first step in the degradation of phenylalanine, or the NADP-dependent dehydrogenase M3. The cluster contains two PKS encoding genes. The tetraketide synthase is responsible for the biosynthesis of the tetraketide sidechain of SQS1. The biosynthesis must involve 3 rounds of chain extension. After the first and second rounds methyl-transfer occurs, and in all rounds of extension the ketoreductase and dehydratase areactive. The enoyl reductase and C-MeT are not active in the final round of extension. The other PKS is therefore likely to encode squalestatin hexaketide synthase (SQHKS). The hexaketide main chain is initiated by benzoate which is an unusual starter unit for a highly reducing polyketide synthase. The cluster also contains a gene encoding a citrate synthase-like protein R3 presumably involved in linking the hexaketide to the oxaloacetate moiety. Formation of the tetraketide CoA may be catalyzed by the M9 CoA ligase, but the mechanism of release of the tetraketide and the hexaketide from their respective PKS remains unknown, although the cluster encodes a potential esterase (M8) and a possible hydrolase (M10) which could be involved in these processes. Two acyltransferases (AT), M4 and R4, are also encoded in the cluster. M4 is responsible for loading of the tetraketide sidechain from CoA onto the squalestatin core as the final step of biosynthesis. M4 appears to have a broad substrate selectivity for its acyl CoA substrate, allowing the in vitro synthesis of novel squalestatins. The biosynthesis of SQS1 requires several oxidative steps likely performed by oxidoreductases M1, R1 and R2. Finally, in support of the identification of the cluster as being responsible for SQS1 production, the cluster contains a gene encoding a putative squalene synthase (SS) R6, suggesting a likely mechanism for self-resistance. This Phoma sp. (strain ATCC 20986 / MF5453) protein is Probable hydrolase R7.